Reading from the N-terminus, the 146-residue chain is ATP synthase epsilon chain (146 aa).

Positions 103 to 122 (SAKKRAEQHMQEAKEKHNER) are disordered.

This sequence belongs to the ATPase epsilon chain family. As to quaternary structure, F-type ATPases have 2 components, CF(1) - the catalytic core - and CF(0) - the membrane proton channel. CF(1) has five subunits: alpha(3), beta(3), gamma(1), delta(1), epsilon(1). CF(0) has three main subunits: a, b and c.

The protein localises to the cell membrane. Its function is as follows. Produces ATP from ADP in the presence of a proton gradient across the membrane. This is ATP synthase epsilon chain from Lactobacillus johnsonii (strain CNCM I-12250 / La1 / NCC 533).